Consider the following 499-residue polypeptide: uncharacterized protein (499 aa).

Disordered regions lie at residues 76–118 and 208–268; these read QATA…RLSP and DFET…DWAN. A compositionally biased stretch (basic and acidic residues) spans 87-104; sequence DPEKQTGKSRYHPSEEIR. A compositionally biased stretch (acidic residues) spans 208–263; it reads DFETEDDESGDDDSEDTGEDEDEEEWVAILEDEDEDDDDDDDDDEDDDDSDSDESL. The residue at position 355 (Ser-355) is a Phosphoserine. Residues 478–499 are disordered; it reads AEGQIRKLLFPKTNQSTQPKPK. The span at 489 to 499 shows a compositional bias: polar residues; the sequence is KTNQSTQPKPK.

This is an uncharacterized protein from Arabidopsis thaliana (Mouse-ear cress).